A 711-amino-acid polypeptide reads, in one-letter code: Polyribonucleotide nucleotidyltransferase (711 aa).

Residues D490 and D496 each contribute to the Mg(2+) site. Residues 557-616 (PRIETMQIPTDKIREVIGSGGKVIREIVETSGAKVDINDDGIIKIASANGEAIKKAYEMI) form the KH domain. In terms of domain architecture, S1 motif spans 626–694 (GKVYTGTVVK…DRGKVRLSMK (69 aa)).

The protein belongs to the polyribonucleotide nucleotidyltransferase family. It depends on Mg(2+) as a cofactor.

Its subcellular location is the cytoplasm. The catalysed reaction is RNA(n+1) + phosphate = RNA(n) + a ribonucleoside 5'-diphosphate. In terms of biological role, involved in mRNA degradation. Catalyzes the phosphorolysis of single-stranded polyribonucleotides processively in the 3'- to 5'-direction. This Dinoroseobacter shibae (strain DSM 16493 / NCIMB 14021 / DFL 12) protein is Polyribonucleotide nucleotidyltransferase.